The primary structure comprises 161 residues: Nucleotide-binding protein Tbd_1846 (161 aa).

It belongs to the YajQ family.

In terms of biological role, nucleotide-binding protein. The chain is Nucleotide-binding protein Tbd_1846 from Thiobacillus denitrificans (strain ATCC 25259 / T1).